The following is a 431-amino-acid chain: Histidinol dehydrogenase (431 aa).

The NAD(+) site is built by tyrosine 130, glutamine 191, and asparagine 214. Substrate-binding residues include serine 237, glutamine 259, and histidine 262. Zn(2+) is bound by residues glutamine 259 and histidine 262. Active-site proton acceptor residues include glutamate 327 and histidine 328. Substrate contacts are provided by histidine 328, aspartate 361, glutamate 415, and histidine 420. Aspartate 361 serves as a coordination point for Zn(2+). Residue histidine 420 participates in Zn(2+) binding.

Belongs to the histidinol dehydrogenase family. Zn(2+) is required as a cofactor.

It catalyses the reaction L-histidinol + 2 NAD(+) + H2O = L-histidine + 2 NADH + 3 H(+). Its pathway is amino-acid biosynthesis; L-histidine biosynthesis; L-histidine from 5-phospho-alpha-D-ribose 1-diphosphate: step 9/9. Functionally, catalyzes the sequential NAD-dependent oxidations of L-histidinol to L-histidinaldehyde and then to L-histidine. This is Histidinol dehydrogenase from Bradyrhizobium diazoefficiens (strain JCM 10833 / BCRC 13528 / IAM 13628 / NBRC 14792 / USDA 110).